Consider the following 74-residue polypeptide: Lantibiotic lichenicidin A1 (74 aa).

Residues 1–42 (MSKKEMILSWKNPMYRTESSYHPAGNILKELQEEEQHSIAGG) constitute a propeptide that is removed on maturation. Position 43 is a 2-oxobutanoic acid (Thr43). Positions 45–49 (TLSTC) form a cross-link, beta-methyllanthionine (Thr-Cys). Ser47 carries the post-translational modification 2,3-didehydroalanine (Ser). Thr48 bears the (Z)-2,3-didehydrobutyrine mark. Residues 53-63 (SKPLGNNGYLC) constitute a cross-link (lanthionine (Ser-Cys)). 2 cross-links (beta-methyllanthionine (Thr-Cys)) span residues 64 to 69 (TVTKEC) and 66 to 73 (TKECMPSC).

In terms of processing, maturation of lantibiotics involves the enzymatic conversion of Thr, and Ser into dehydrated AA and the formation of thioether bonds with cysteine. This is followed by membrane translocation and cleavage of the modified precursor.

The protein resides in the secreted. The protein localises to the cell wall. Its function is as follows. Lanthionine-containing peptide antibiotic (lantibiotic) active on Gram-positive bacteria. The bactericidal activity of lantibiotics is based on depolarization of energized bacterial cytoplasmic membranes, initiated by the formation of aqueous transmembrane pores. When present individually, LchA1 exhibits activity towards L.lactis HP. When combined with LchA2, it displays activity towards a broad spectrum of non-pathogenic and pathogenic Gram-positive bacteria including strains of L.monocytogenes, methicillin-resistant S.aureus, S.pneumoniae and strains of vancomycin-resistant enterococci, but not towards E.faecium L4001 and BM4147-1. Combined LchA1 and LchA2 peptides also inhibit Bacillus sp. HIL-Y85/54728, L.lactis DPC3417 and B.halodurans C-125, which produce lantibiotics themselves. Inactivated by proteinase K and pronase E, but not by trypsin and chymotrypsin. The chain is Lantibiotic lichenicidin A1 from Bacillus licheniformis (strain ATCC 14580 / DSM 13 / JCM 2505 / CCUG 7422 / NBRC 12200 / NCIMB 9375 / NCTC 10341 / NRRL NRS-1264 / Gibson 46).